A 163-amino-acid chain; its full sequence is Nitrogen regulatory protein (163 aa).

The PTS EIIA type-2 domain occupies 12–156 (SVLNRECTRS…EELYQIITDT (145 aa)). Residue His-73 is the Tele-phosphohistidine intermediate of the active site.

It is found in the cytoplasm. In terms of biological role, seems to have a role in regulating nitrogen assimilation. This Escherichia coli (strain K12) protein is Nitrogen regulatory protein (ptsN).